We begin with the raw amino-acid sequence, 365 residues long: MKEVKEALFMNKGEGESSYAQNSSFTETVTSMTMPVLENAVETLFSKDFHLLQALNAVDLGCAAGPTTFTVISTIKKMMEKKCRELNCQTLELQVYLNDLPGNDFNTLFKGLSSKVVGNNCEEVSCYVVGVPGSFHGRLFPRNSLHLVHSCYSVHWLTQAPKGLTSKEGLALNKGKIYISKTSPPVVREAYLSQFHEDFTMFLNSRSQEVVPNGCMVLILRGRLSSDPSDMESCFTWELLAAAIAELVSQGLIDEDKLDTFNVPSYFPSLEEVKDIVERNGSFTIDHMEGFELDSPQMQENDKWVRGEKFATVARASTEPIISNQFGHEIMDKLYEKFTHIVISDLEAKIPKVTSIILVLSKIVG.

Tyr19 provides a ligand contact to S-adenosyl-L-homocysteine. Residue Thr26 participates in theobromine binding. Positions 62, 99, 100, 134, and 135 each coordinate S-adenosyl-L-homocysteine. Residues Tyr152, His155, and Trp156 each coordinate theobromine. Mg(2+) is bound at residue Asn173. Arg221 contacts theobromine. Mg(2+)-binding residues include Asp259, Phe261, and Asn262.

Belongs to the methyltransferase superfamily. Type-7 methyltransferase family. The cofactor is Mg(2+).

It catalyses the reaction 7-methylxanthine + S-adenosyl-L-methionine = theobromine + S-adenosyl-L-homocysteine + H(+). In terms of biological role, no detectable N-methyltransferase activity. This chain is Probable 7-methylxanthine methyltransferase PCS2, found in Camellia ptilophylla (Cocoa tea).